The primary structure comprises 206 residues: Guanylate kinase (206 aa).

One can recognise a Guanylate kinase-like domain in the interval 5-184 (GMLIVLSGPS…AAERIKAIIR (180 aa)). 12–19 (GPSGVGKG) serves as a coordination point for ATP.

Belongs to the guanylate kinase family.

It is found in the cytoplasm. It carries out the reaction GMP + ATP = GDP + ADP. Functionally, essential for recycling GMP and indirectly, cGMP. The protein is Guanylate kinase of Lactiplantibacillus plantarum (strain ATCC BAA-793 / NCIMB 8826 / WCFS1) (Lactobacillus plantarum).